The sequence spans 402 residues: Propionate kinase (402 aa).

The ATP site is built by Asn11 and Lys18. Asn11 provides a ligand contact to Mg(2+). Arg86 contacts substrate. Catalysis depends on Asp143, which acts as the Proton donor/acceptor. ATP-binding positions include His175, 203 to 207, 278 to 280, and 326 to 330; these read HLGNG, DLR, and GIGEN.

The protein belongs to the acetokinase family. TdcD subfamily. As to quaternary structure, homodimer. It depends on Mg(2+) as a cofactor.

The catalysed reaction is propanoate + ATP = propanoyl phosphate + ADP. It participates in amino-acid degradation; L-threonine degradation via propanoate pathway; propanoate from L-threonine: step 4/4. In terms of biological role, catalyzes the conversion of propionyl phosphate and ADP to propionate and ATP. In Escherichia coli O157:H7, this protein is Propionate kinase.